A 2603-amino-acid chain; its full sequence is Ankyrin repeat domain-containing protein 17 (2603 aa).

M1 is modified (N-acetylmethionine). 2 stretches are compositionally biased toward low complexity: residues 1–34 (MEKA…AAAE) and 42–53 (SSRARSASSPRG). The interval 1 to 143 (MEKATVPVAA…SFILDQDDLE (143 aa)) is disordered. Phosphoserine occurs at positions 19 and 50. A compositionally biased stretch (basic residues) spans 63 to 79 (KKKPPQQQHHKAKRNRT). A compositionally biased stretch (low complexity) spans 84-94 (SSSESSSDSDN). Over residues 95-111 (SGGGGGGGGGGGGGGGT) the composition is skewed to gly residues. Positions 116–131 (SEEEEDDDDEEEEVSE) are enriched in acidic residues. S156 is subject to Phosphoserine. 15 ANK repeats span residues 233–262 (SDNR…SVNE), 266–295 (EGES…NVED), 300–329 (GDIT…DVNA), 333–362 (TGNT…SIED), 366–395 (NGHT…GINT), 400–429 (FKES…DQEH), 433–462 (EMHT…QVNM), 466–495 (SFES…SLEE), 499–528 (EGYT…NINA), 533–562 (TQET…DIEL), 563–592 (GCST…NVHA), 596–625 (TGDT…DLEH), 629–658 (GGRT…NVNR), 663–692 (NDHT…DPTH), and 696–725 (DGST…NLLS). K318 participates in a covalent cross-link: Glycyl lysine isopeptide (Lys-Gly) (interchain with G-Cter in SUMO2). Phosphoserine is present on S803. ANK repeat units follow at residues 1082-1111 (NHDT…SIEH), 1115-1144 (KGFT…DIEA), 1149-1178 (TKDT…NKEH), 1182-1211 (SDYT…EINS), 1217-1246 (LGIS…DINA), 1251-1280 (NRNT…NVEH), 1284-1313 (TGLT…DVNA), 1319-1348 (SRDT…HIDV), 1352-1381 (KGNT…DVDA), and 1385-1414 (RKIT…QFPS). Residues 1442–1526 (VQAKDRQAAE…EKEKLKVEDE (85 aa)) adopt a coiled-coil conformation. The residue at position 1457 (S1457) is a Phosphoserine. 2 disordered regions span residues 1479–1500 (AKRE…RKLE) and 1517–1717 (EKEK…QKRE). Positions 1481–1491 (REKRKEKRRKK) are enriched in basic residues. Composition is skewed to low complexity over residues 1531–1550 (TEPP…TWTT), 1602–1611 (ESKSSSTSES), and 1620–1632 (SSCS…SNSS). Residues S1635 and S1639 each carry the phosphoserine modification. 2 stretches are compositionally biased toward polar residues: residues 1642–1652 (VVTTTVSSKKQ) and 1675–1703 (LSET…SPNG). Residues S1696, S1700, and S1709 each carry the phosphoserine modification. The KH domain maps to 1725–1789 (RRSKKVSVPS…ESTRQATQLI (65 aa)). Residue R1874 is modified to Asymmetric dimethylarginine. 3 disordered regions span residues 1906–1995 (PRLP…PSVR), 2011–2192 (TTVT…HKNS), and 2273–2332 (VVSS…YGSV). Low complexity-rich tracts occupy residues 1950–1995 (SNQN…PSVR) and 2011–2028 (TTVT…TNAT). S2042, S2044, S2045, S2047, S2059, and S2067 each carry phosphoserine. Polar residues predominate over residues 2066–2078 (ASPNKVASSSEQE). The segment covering 2095–2106 (SSSSSGSSSAHS) has biased composition (low complexity). Composition is skewed to polar residues over residues 2107-2127 (NQQQ…QQSQ) and 2273-2303 (VVSS…SDTS). The segment covering 2308–2318 (FRPPLQRPAPS) has biased composition (pro residues). Residues S2373 and S2401 each carry the phosphoserine modification. The tract at residues 2381-2423 (CSSASNDSSAQSVSSGVRAPSPAPSSVPLGSEKPSNVSQDRKV) is disordered. The segment covering 2382 to 2411 (SSASNDSSAQSVSSGVRAPSPAPSSVPLGS) has biased composition (low complexity).

As to quaternary structure, interacts (via N-terminus) with NOD2. Interacts with CDK2, MCM3, MCM5, MCM7, CDC6 and PCNA. Interacts with MAVS and IFIH1. Interacts (via the second ankyrin repeat cluster) with DDX58. (Microbial infection) Interacts with enterovirus 71/EV71 capsid protein VP1. Post-translationally, phosphorylated by CDK2. In terms of tissue distribution, ubiquitously expressed.

The protein resides in the cytoplasm. It localises to the nucleus. Its function is as follows. Could play pivotal roles in cell cycle and DNA regulation. Involved in innate immune defense against viruse by positively regulating the viral dsRNA receptors DDX58 and IFIH1 signaling pathways. Involves in NOD2- and NOD1-mediated responses to bacteria suggesting a role in innate antibacterial immune pathways too. Target of enterovirus 71 which is the major etiological agent of HFMD (hand, foot and mouth disease). Could play a central role for the formation and/or maintenance of the blood vessels of the circulation system. This is Ankyrin repeat domain-containing protein 17 (ANKRD17) from Homo sapiens (Human).